A 927-amino-acid polypeptide reads, in one-letter code: Protein LONGIFOLIA 1 (927 aa).

Disordered stretches follow at residues threonine 41–arginine 198, tyrosine 210–arginine 257, alanine 460–asparagine 588, and tyrosine 605–methionine 626. Low complexity predominate over residues serine 86 to serine 114. Residues glutamine 115–glutamate 125 are compositionally biased toward polar residues. A compositionally biased stretch (basic and acidic residues) spans aspartate 146 to glutamate 165. The segment covering lysine 182 to tryptophan 193 has biased composition (polar residues). Residues tyrosine 210–proline 226 show a composition bias toward basic and acidic residues. Residues serine 232–serine 245 show a composition bias toward low complexity. Composition is skewed to polar residues over residues glutamine 483–serine 500 and asparagine 538–alanine 553. Composition is skewed to basic and acidic residues over residues serine 569–arginine 584 and tyrosine 605–threonine 616.

Interacts (via C-terminus) with TON1A and TON1B. As to expression, expressed in roots, petioles, leaf blades and floral organs.

It localises to the nucleus. Functionally, in association with LNG2, regulates leaf morphology by promoting longitudinal polar cell elongation independently of ROT3. The protein is Protein LONGIFOLIA 1 (LNG1) of Arabidopsis thaliana (Mouse-ear cress).